We begin with the raw amino-acid sequence, 500 residues long: Cytochrome P450 monooxygenase hepD (500 aa).

Residues 15–35 form a helical membrane-spanning segment; sequence WILLSLSLAFIVVYSLFYLAV. 4 N-linked (GlcNAc...) asparagine glycosylation sites follow: Asn-99, Asn-185, Asn-373, and Asn-409. Residue Cys-445 coordinates heme. Asn-482 carries N-linked (GlcNAc...) asparagine glycosylation.

Belongs to the cytochrome P450 family. Heme serves as cofactor.

It localises to the membrane. It participates in secondary metabolite biosynthesis. In terms of biological role, cytochrome P450 monooxygenase; part of the gene cluster that mediates the biosynthesis of heptelidic acid (HA), a sesquiterpene lactone that acts as an inhibitor of glyceraldehyde-3-phosphatedehydrogenase (GAPDH) and a growth inhibitor of the salt-tolerant lactic acid bacteria in soy sauce brewing. This Aspergillus oryzae (strain ATCC 42149 / RIB 40) (Yellow koji mold) protein is Cytochrome P450 monooxygenase hepD.